A 429-amino-acid chain; its full sequence is Argininosuccinate lyase (429 aa).

Belongs to the lyase 1 family. Argininosuccinate lyase subfamily.

It localises to the cytoplasm. The catalysed reaction is 2-(N(omega)-L-arginino)succinate = fumarate + L-arginine. It participates in amino-acid biosynthesis; L-arginine biosynthesis; L-arginine from L-ornithine and carbamoyl phosphate: step 3/3. In Pyrobaculum arsenaticum (strain DSM 13514 / JCM 11321 / PZ6), this protein is Argininosuccinate lyase.